The primary structure comprises 200 residues: HTH-type transcriptional regulator BetI (200 aa).

The HTH tetR-type domain occupies 8 to 68 (DIRKPQLVQA…ETMREILRQL (61 aa)). Residues 31–50 (SIALISKEAGVSTGIINHYF) constitute a DNA-binding region (H-T-H motif).

Its pathway is amine and polyamine biosynthesis; betaine biosynthesis via choline pathway [regulation]. Repressor involved in the biosynthesis of the osmoprotectant glycine betaine. It represses transcription of the choline transporter BetT and the genes of BetAB involved in the synthesis of glycine betaine. This chain is HTH-type transcriptional regulator BetI, found in Vibrio atlanticus (strain LGP32) (Vibrio splendidus (strain Mel32)).